The sequence spans 354 residues: Carbamoyl phosphate synthase small chain (354 aa).

The CPSase stretch occupies residues Met1–Asn167. L-glutamine-binding residues include Ser45, Gly219, and Gly221. Positions Arg171 to Lys354 constitute a Glutamine amidotransferase type-1 domain. The Nucleophile role is filled by Cys246. 5 residues coordinate L-glutamine: Leu247, Gln250, Asn288, Gly290, and Phe291. Residues His330 and Glu332 contribute to the active site.

The protein belongs to the CarA family. In terms of assembly, composed of two chains; the small (or glutamine) chain promotes the hydrolysis of glutamine to ammonia, which is used by the large (or ammonia) chain to synthesize carbamoyl phosphate. Tetramer of heterodimers (alpha,beta)4.

It catalyses the reaction hydrogencarbonate + L-glutamine + 2 ATP + H2O = carbamoyl phosphate + L-glutamate + 2 ADP + phosphate + 2 H(+). It carries out the reaction L-glutamine + H2O = L-glutamate + NH4(+). The protein operates within amino-acid biosynthesis; L-arginine biosynthesis; carbamoyl phosphate from bicarbonate: step 1/1. Its pathway is pyrimidine metabolism; UMP biosynthesis via de novo pathway; (S)-dihydroorotate from bicarbonate: step 1/3. In terms of biological role, small subunit of the glutamine-dependent carbamoyl phosphate synthetase (CPSase). CPSase catalyzes the formation of carbamoyl phosphate from the ammonia moiety of glutamine, carbonate, and phosphate donated by ATP, constituting the first step of 2 biosynthetic pathways, one leading to arginine and/or urea and the other to pyrimidine nucleotides. The small subunit (glutamine amidotransferase) binds and cleaves glutamine to supply the large subunit with the substrate ammonia. The sequence is that of Carbamoyl phosphate synthase small chain from Methanocaldococcus jannaschii (strain ATCC 43067 / DSM 2661 / JAL-1 / JCM 10045 / NBRC 100440) (Methanococcus jannaschii).